The primary structure comprises 121 residues: Large ribosomal subunit protein bL12 (121 aa).

The protein belongs to the bacterial ribosomal protein bL12 family. In terms of assembly, homodimer. Part of the ribosomal stalk of the 50S ribosomal subunit. Forms a multimeric L10(L12)X complex, where L10 forms an elongated spine to which 2 to 4 L12 dimers bind in a sequential fashion. Binds GTP-bound translation factors.

Its function is as follows. Forms part of the ribosomal stalk which helps the ribosome interact with GTP-bound translation factors. Is thus essential for accurate translation. The sequence is that of Large ribosomal subunit protein bL12 from Klebsiella pneumoniae (strain 342).